A 318-amino-acid chain; its full sequence is Putative 2-hydroxyacid dehydrogenase SSP0606 (318 aa).

NAD(+) is bound by residues 156–157, 235–237, and aspartate 261; these read EI and ASR. Arginine 237 is a catalytic residue. The active site involves glutamate 266. Histidine 284 acts as the Proton donor in catalysis. NAD(+) is bound at residue 284–287; sequence HIGN.

The protein belongs to the D-isomer specific 2-hydroxyacid dehydrogenase family.

The chain is Putative 2-hydroxyacid dehydrogenase SSP0606 from Staphylococcus saprophyticus subsp. saprophyticus (strain ATCC 15305 / DSM 20229 / NCIMB 8711 / NCTC 7292 / S-41).